Consider the following 383-residue polypeptide: Chaperone protein DnaJ (383 aa).

The J domain maps to 5–70; the sequence is DYYEALGVAR…QKRAAYDQFG (66 aa). The segment at 139 to 217 adopts a CR-type zinc-finger fold; the sequence is GTEVQIRVPT…CGGRGRVQSQ (79 aa). Positions 152, 155, 169, 172, 191, 194, 205, and 208 each coordinate Zn(2+). 4 CXXCXGXG motif repeats span residues 152-159, 169-176, 191-198, and 205-212; these read CDACDGKG, CPTCKGHG, CPRCGGSG, and CRKCGGRG. A disordered region spans residues 230–249; the sequence is TGDRIRLSGEGEPGENGGPP.

This sequence belongs to the DnaJ family. As to quaternary structure, homodimer. Requires Zn(2+) as cofactor.

It localises to the cytoplasm. Functionally, participates actively in the response to hyperosmotic and heat shock by preventing the aggregation of stress-denatured proteins and by disaggregating proteins, also in an autonomous, DnaK-independent fashion. Unfolded proteins bind initially to DnaJ; upon interaction with the DnaJ-bound protein, DnaK hydrolyzes its bound ATP, resulting in the formation of a stable complex. GrpE releases ADP from DnaK; ATP binding to DnaK triggers the release of the substrate protein, thus completing the reaction cycle. Several rounds of ATP-dependent interactions between DnaJ, DnaK and GrpE are required for fully efficient folding. Also involved, together with DnaK and GrpE, in the DNA replication of plasmids through activation of initiation proteins. The sequence is that of Chaperone protein DnaJ from Alkalilimnicola ehrlichii (strain ATCC BAA-1101 / DSM 17681 / MLHE-1).